Consider the following 273-residue polypeptide: Dermonecrotic toxin LruSicTox-alphaIC1b (273 aa).

His-5 is a catalytic residue. Glu-25 and Asp-27 together coordinate Mg(2+). His-41 acts as the Nucleophile in catalysis. Intrachain disulfides connect Cys-45-Cys-51 and Cys-47-Cys-190. Asp-85 provides a ligand contact to Mg(2+).

This sequence belongs to the arthropod phospholipase D family. Class II subfamily. Requires Mg(2+) as cofactor. In terms of tissue distribution, expressed by the venom gland.

The protein localises to the secreted. The enzyme catalyses an N-(acyl)-sphingosylphosphocholine = an N-(acyl)-sphingosyl-1,3-cyclic phosphate + choline. The catalysed reaction is an N-(acyl)-sphingosylphosphoethanolamine = an N-(acyl)-sphingosyl-1,3-cyclic phosphate + ethanolamine. It catalyses the reaction a 1-acyl-sn-glycero-3-phosphocholine = a 1-acyl-sn-glycero-2,3-cyclic phosphate + choline. It carries out the reaction a 1-acyl-sn-glycero-3-phosphoethanolamine = a 1-acyl-sn-glycero-2,3-cyclic phosphate + ethanolamine. In terms of biological role, dermonecrotic toxins cleave the phosphodiester linkage between the phosphate and headgroup of certain phospholipids (sphingolipid and lysolipid substrates), forming an alcohol (often choline) and a cyclic phosphate. This toxin acts on sphingomyelin (SM). It may also act on ceramide phosphoethanolamine (CPE), lysophosphatidylcholine (LPC) and lysophosphatidylethanolamine (LPE), but not on lysophosphatidylserine (LPS), and lysophosphatidylglycerol (LPG). It acts by transphosphatidylation, releasing exclusively cyclic phosphate products as second products. Induces dermonecrosis, hemolysis, increased vascular permeability, edema, inflammatory response, and platelet aggregation. This Loxosceles rufescens (Mediterranean recluse spider) protein is Dermonecrotic toxin LruSicTox-alphaIC1b.